The chain runs to 75 residues: UPF0346 protein LSL_0716 (75 aa).

This sequence belongs to the UPF0346 family.

The polypeptide is UPF0346 protein LSL_0716 (Ligilactobacillus salivarius (strain UCC118) (Lactobacillus salivarius)).